The sequence spans 2130 residues: Dedicator of cytokinesis protein 7 (2130 aa).

Ser-30 carries the post-translational modification Phosphoserine. Positions 137–175 (GFNPNTLDKQKERQKGLPRQVFESDEAPDGSSYQDEQDD) are disordered. Ser-180 and Ser-182 each carry phosphoserine. Positions 365-395 (FKEADATKNKEKLEKLKSQADQFCQRLGKYR) form a coiled coil. Lys-381 carries the N6-methyllysine modification. The residue at position 450 (Thr-450) is a Phosphothreonine. Ser-452 is subject to Phosphoserine. Positions 561 to 727 (RNLLYIYPQS…GVFNVEVVAV (167 aa)) constitute a C2 DOCK-type domain. 7 positions are modified to phosphoserine: Ser-862, Ser-864, Ser-882, Ser-888, Ser-896, Ser-900, and Ser-905. Low complexity predominate over residues 888 to 901 (SLNLNRSRSLSNSN). The disordered stretch occupies residues 888–966 (SLNLNRSRSL…SCNRMSSHTE (79 aa)). Residues Thr-907 and Thr-909 each carry the phosphothreonine modification. Ser-910, Ser-929, Ser-963, Ser-1382, Ser-1420, Ser-1422, Ser-1424, and Ser-1428 each carry phosphoserine. A compositionally biased stretch (polar residues) spans 942-966 (SNPSPSAESTQAMDRSCNRMSSHTE). Residues 1668–2104 (KGYQTSPDLR…LQPLINRKIP (437 aa)) enclose the DOCKER domain. Lys-1952 is subject to N6-acetyllysine. Residues 2076-2102 (DQKEYQRELERNYHRLKEALQPLINRK) are a coiled coil. Phosphoserine is present on Ser-2119.

It belongs to the DOCK family. In terms of assembly, component of the DOCK7-induced septin displacement/DISP complex, at least composed of DOCK7, LRCH3 and MYO6. Interacts with TSC1. Interacts with nucleotide-free RAC1 and RAC3. Interacts with TACC3. Interacts with CRY1. Interacts with NOD2.

Its subcellular location is the cell projection. It is found in the axon. In terms of biological role, functions as a guanine nucleotide exchange factor (GEF), which activates Rac1 and Rac3 Rho small GTPases by exchanging bound GDP for free GTP. Does not have a GEF activity for CDC42. Required for STMN1 'Ser-15' phosphorylation during axon formation and consequently for neuronal polarization. As part of the DISP complex, may regulate the association of septins with actin and thereby regulate the actin cytoskeleton. Has a role in pigmentation. Involved in the regulation of cortical neurogenesis through the control of radial glial cells (RGCs) proliferation versus differentiation; negatively regulates the basal-to-apical interkinetic nuclear migration of RGCs by antagonizing the microtubule growth-promoting function of TACC3. The polypeptide is Dedicator of cytokinesis protein 7 (Dock7) (Mus musculus (Mouse)).